The primary structure comprises 54 residues: MLHYAVVFFIIALIAAVFGFGGIAASAAGIAKILFFVFVVLAVASFLFGLIRKG.

The next 2 helical transmembrane spans lie at 5–25 (AVVFFIIALIAAVFGFGGIAA) and 30–50 (IAKILFFVFVVLAVASFLFGL).

Belongs to the UPF0391 family.

The protein resides in the cell membrane. The protein is UPF0391 membrane protein Mpe_A2904 of Methylibium petroleiphilum (strain ATCC BAA-1232 / LMG 22953 / PM1).